The sequence spans 460 residues: Tyrosine phenol-lyase (460 aa).

Lys260 is modified (N6-(pyridoxal phosphate)lysine).

This sequence belongs to the beta-eliminating lyase family. In terms of assembly, homotetramer. Pyridoxal 5'-phosphate is required as a cofactor.

The catalysed reaction is L-tyrosine + H2O = phenol + pyruvate + NH4(+). This chain is Tyrosine phenol-lyase, found in Clostridium tetani (strain Massachusetts / E88).